Here is a 277-residue protein sequence, read N- to C-terminus: Formamidopyrimidine-DNA glycosylase (277 aa).

Proline 2 (schiff-base intermediate with DNA) is an active-site residue. Glutamate 3 serves as the catalytic Proton donor. The active-site Proton donor; for beta-elimination activity is lysine 59. Residues histidine 96, arginine 115, and arginine 158 each coordinate DNA. The FPG-type zinc-finger motif lies at tryptophan 243–lysine 277. The active-site Proton donor; for delta-elimination activity is the arginine 267.

This sequence belongs to the FPG family. Monomer. The cofactor is Zn(2+).

It catalyses the reaction Hydrolysis of DNA containing ring-opened 7-methylguanine residues, releasing 2,6-diamino-4-hydroxy-5-(N-methyl)formamidopyrimidine.. The catalysed reaction is 2'-deoxyribonucleotide-(2'-deoxyribose 5'-phosphate)-2'-deoxyribonucleotide-DNA = a 3'-end 2'-deoxyribonucleotide-(2,3-dehydro-2,3-deoxyribose 5'-phosphate)-DNA + a 5'-end 5'-phospho-2'-deoxyribonucleoside-DNA + H(+). Functionally, involved in base excision repair of DNA damaged by oxidation or by mutagenic agents. Acts as a DNA glycosylase that recognizes and removes damaged bases. Has a preference for oxidized purines, such as 7,8-dihydro-8-oxoguanine (8-oxoG). Has AP (apurinic/apyrimidinic) lyase activity and introduces nicks in the DNA strand. Cleaves the DNA backbone by beta-delta elimination to generate a single-strand break at the site of the removed base with both 3'- and 5'-phosphates. This chain is Formamidopyrimidine-DNA glycosylase, found in Heliobacterium modesticaldum (strain ATCC 51547 / Ice1).